A 517-amino-acid chain; its full sequence is DNA-directed RNA polymerase subunit alpha (517 aa).

This sequence belongs to the RNA polymerase alpha chain family. In plastids the minimal PEP RNA polymerase catalytic core is composed of four subunits: alpha, beta, beta', and beta''. When a (nuclear-encoded) sigma factor is associated with the core the holoenzyme is formed, which can initiate transcription.

It localises to the plastid. Its subcellular location is the chloroplast. The enzyme catalyses RNA(n) + a ribonucleoside 5'-triphosphate = RNA(n+1) + diphosphate. Its function is as follows. DNA-dependent RNA polymerase catalyzes the transcription of DNA into RNA using the four ribonucleoside triphosphates as substrates. In Stigeoclonium helveticum (Green alga), this protein is DNA-directed RNA polymerase subunit alpha (rpoA).